The sequence spans 705 residues: Frizzled-4 (705 aa).

An N-terminal signal peptide occupies residues Met-1–Ser-22. The span at Lys-21 to Pro-37 shows a compositional bias: low complexity. Residues Lys-21–Ile-40 form a disordered region. Over Ser-23–Glu-233 the chain is Extracellular. Residues Pro-41–Gly-163 enclose the FZ domain. Disulfide bonds link Cys-46–Cys-107, Cys-54–Cys-100, Cys-91–Cys-130, Cys-119–Cys-160, and Cys-123–Cys-147. Residue Asn-60 is glycosylated (N-linked (GlcNAc...) asparagine). Residues Ile-234–Leu-254 form a helical membrane-spanning segment. Over Leu-255–Leu-270 the chain is Cytoplasmic. Residues Leu-271–Val-291 form a helical membrane-spanning segment. The Extracellular portion of the chain corresponds to Gly-292–Ser-322. Residues Asn-306 and Asn-317 are each glycosylated (N-linked (GlcNAc...) asparagine). The helical transmembrane segment at Val-323–Leu-343 threads the bilayer. The Cytoplasmic portion of the chain corresponds to Gly-344–Asn-386. A helical membrane pass occupies residues Asn-387–Ala-407. Residues Arg-408–Gln-430 are Extracellular-facing. A glycan (N-linked (GlcNAc...) asparagine) is linked at Asn-423. The helical transmembrane segment at Ile-431–Gly-451 threads the bilayer. The Cytoplasmic segment spans residues Tyr-452 to Ser-483. A helical membrane pass occupies residues Gly-484–Ile-504. Topologically, residues Tyr-505–Arg-529 are extracellular. A helical transmembrane segment spans residues Ala-530–Ser-550. Topologically, residues Thr-551 to Leu-705 are cytoplasmic. Residues Arg-635–Tyr-681 are disordered. The segment covering Ser-636–Ser-670 has biased composition (basic residues). Positions Thr-703 to Leu-705 match the PDZ-binding motif.

This sequence belongs to the G-protein coupled receptor Fz/Smo family.

The protein localises to the membrane. Its function is as follows. Receptor for Wnt proteins. Most of frizzled receptors are coupled to the beta-catenin canonical signaling pathway, which leads to the activation of disheveled proteins, inhibition of GSK-3 kinase, nuclear accumulation of beta-catenin and activation of Wnt target genes. A second signaling pathway involving PKC and calcium fluxes has been seen for some family members, but it is not yet clear if it represents a distinct pathway or if it can be integrated in the canonical pathway, as PKC seems to be required for Wnt-mediated inactivation of GSK-3 kinase. Both pathways seem to involve interactions with G-proteins. May be involved in transduction and intercellular transmission of polarity information during tissue morphogenesis and/or in differentiated tissues. Required to coordinate the cytoskeletons of epidermal cells to produce a parallel array of cuticular hairs and bristles. The sequence is that of Frizzled-4 (fz4) from Drosophila melanogaster (Fruit fly).